The chain runs to 415 residues: Plant UBX domain-containing protein 16 (415 aa).

The UBA domain maps to 19 to 69 (QLDEEIVLFRQDQLISSFLEIAVDQTAETARILLQTTDWNIDQAVNLFLTN). Positions 333–413 (DRSVVCSLCV…GLANSLISVT (81 aa)) constitute a UBX domain.

This is Plant UBX domain-containing protein 16 from Arabidopsis thaliana (Mouse-ear cress).